The following is a 131-amino-acid chain: Small ribosomal subunit protein uS9c (131 aa).

The protein belongs to the universal ribosomal protein uS9 family.

The protein localises to the plastid. The protein resides in the chloroplast. This chain is Small ribosomal subunit protein uS9c (rps9), found in Emiliania huxleyi (Coccolithophore).